We begin with the raw amino-acid sequence, 265 residues long: Deoxycytidine kinase 2 (265 aa).

31–39 (GNIAAGKST) contacts ATP. Positions 56, 89, and 100 each coordinate substrate. The active-site Proton acceptor is the Glu130. Residues Arg131 and Asp136 each contribute to the substrate site. ATP is bound at residue 191–195 (RLQKR). Residue Glu200 participates in substrate binding. 243–245 (EDF) lines the ATP pocket.

This sequence belongs to the DCK/DGK family. As to quaternary structure, homodimer. As to expression, expressed at high levels in adult intestine, spleen, thymus and testis with lower levels in skeletal muscle and eye. In the embryo, expressed at higher levels until day 10 with lower levels in later stages.

The protein localises to the nucleus. It catalyses the reaction 2'-deoxycytidine + a ribonucleoside 5'-triphosphate = dCMP + a ribonucleoside 5'-diphosphate + H(+). The catalysed reaction is 2'-deoxyguanosine + ATP = dGMP + ADP + H(+). It carries out the reaction 2'-deoxyadenosine + ATP = dAMP + ADP + H(+). In terms of biological role, phosphorylates the deoxyribonucleosides deoxyadenosine, deoxycytidine and deoxyguanosine. Shows highest activity against deoxyguanosine followed by deoxycytidine and then deoxyadenosine. Shows only very minor activity against deoxyuridine and deoxythymidine. In Gallus gallus (Chicken), this protein is Deoxycytidine kinase 2.